Consider the following 279-residue polypeptide: Movement protein (279 aa).

The segment at Ser246 to Leu279 is disordered. A compositionally biased stretch (low complexity) spans Glu254–Ser268.

The protein belongs to the cucumovirus movement protein family.

The protein localises to the host cell junction. It is found in the host plasmodesma. Transports viral genome to neighboring plant cells directly through plasmosdesmata, without any budding. The movement protein allows efficient cell to cell propagation, by bypassing the host cell wall barrier. Acts by forming a tubular structure at the host plasmodesmata, enlarging it enough to allow free passage of virion capsids. This is Movement protein from Cucumber mosaic virus (strain O) (CMV).